Here is a 92-residue protein sequence, read N- to C-terminus: Putative protein pog (92 aa).

The sequence is that of Putative protein pog from Acute bee paralysis virus (strain Rothamsted) (ABPV).